Consider the following 103-residue polypeptide: UPF0473 protein SSA_2239 (103 aa).

The protein belongs to the UPF0473 family.

This chain is UPF0473 protein SSA_2239, found in Streptococcus sanguinis (strain SK36).